Reading from the N-terminus, the 97-residue chain is Citrate lyase acyl carrier protein (97 aa).

The residue at position 14 (Ser14) is an O-(phosphoribosyl dephospho-coenzyme A)serine.

This sequence belongs to the CitD family. Oligomer with a subunit composition of (alpha,beta,gamma)6.

Its subcellular location is the cytoplasm. Its function is as follows. Covalent carrier of the coenzyme of citrate lyase. In Escherichia fergusonii (strain ATCC 35469 / DSM 13698 / CCUG 18766 / IAM 14443 / JCM 21226 / LMG 7866 / NBRC 102419 / NCTC 12128 / CDC 0568-73), this protein is Citrate lyase acyl carrier protein.